The sequence spans 70 residues: Large ribosomal subunit protein bL33m (70 aa).

It belongs to the bacterial ribosomal protein bL33 family. In terms of assembly, component of the mitochondrial large ribosomal subunit (mt-LSU). Mature yeast 74S mitochondrial ribosomes consist of a small (37S) and a large (54S) subunit. The 37S small subunit contains a 15S ribosomal RNA (15S mt-rRNA) and 34 different proteins. The 54S large subunit contains a 21S rRNA (21S mt-rRNA) and 46 different proteins. bL33m stabilizes the tRNA acceptor stem in the E-site.

It localises to the mitochondrion. Functionally, component of the mitochondrial ribosome (mitoribosome), a dedicated translation machinery responsible for the synthesis of mitochondrial genome-encoded proteins, including at least some of the essential transmembrane subunits of the mitochondrial respiratory chain. The mitoribosomes are attached to the mitochondrial inner membrane and translation products are cotranslationally integrated into the membrane. The chain is Large ribosomal subunit protein bL33m (MRPL39) from Saccharomyces cerevisiae (strain ATCC 204508 / S288c) (Baker's yeast).